Here is a 623-residue protein sequence, read N- to C-terminus: Chaperone protein HtpG (623 aa).

The interval 1–341 (MEKREFKAES…SQDLSLNISR (341 aa)) is a; substrate-binding. The tract at residues 342–549 (EMLQHDRQLS…EGEVSIEMEK (208 aa)) is b. A c region spans residues 550–623 (ILSAMPNNQG…FTNDICKLMK (74 aa)).

Belongs to the heat shock protein 90 family. Homodimer.

Its subcellular location is the cytoplasm. In terms of biological role, molecular chaperone. Has ATPase activity. This is Chaperone protein HtpG from Clostridium perfringens (strain ATCC 13124 / DSM 756 / JCM 1290 / NCIMB 6125 / NCTC 8237 / Type A).